Reading from the N-terminus, the 94-residue chain is DNA-directed RNA polymerase subunit omega (94 aa).

It belongs to the RNA polymerase subunit omega family. As to quaternary structure, the RNAP catalytic core consists of 2 alpha, 1 beta, 1 beta' and 1 omega subunit. When a sigma factor is associated with the core the holoenzyme is formed, which can initiate transcription.

It carries out the reaction RNA(n) + a ribonucleoside 5'-triphosphate = RNA(n+1) + diphosphate. Functionally, promotes RNA polymerase assembly. Latches the N- and C-terminal regions of the beta' subunit thereby facilitating its interaction with the beta and alpha subunits. The polypeptide is DNA-directed RNA polymerase subunit omega (Tolumonas auensis (strain DSM 9187 / NBRC 110442 / TA 4)).